Reading from the N-terminus, the 8545-residue chain is Nuclear anchorage protein 1 (8545 aa).

Residues 1–325 form an actin-binding region; it reads MSSSPPARPC…VITYVSQFVR (325 aa). Over 1–8494 the chain is Cytoplasmic; sequence MSSSPPARPC…QRSRWRRVLR (8494 aa). Residues 23–130 enclose the Calponin-homology (CH) 1 domain; sequence KAQKNTFTRW…LIWQIILHFQ (108 aa). Residues 148 to 197 form a disordered region; it reads TEEPTSSAQPEVVVTAPSPTPSSKKSHSKVSSLSGSKTSLASGEKAPSSP. Low complexity predominate over residues 159 to 190; the sequence is VVVTAPSPTPSSKKSHSKVSSLSGSKTSLASG. The region spanning 222–328 is the Calponin-homology (CH) 2 domain; sequence QSVEQVFLRW…YVSQFVRMFG (107 aa). Coiled-coil stretches lie at residues 754–774, 1072–1101, 1215–1236, 1324–1384, 1574–1629, 1725–1754, 1950–1981, 2103–2580, 2682–2712, 2852–2949, 3002–3119, 3178–3295, 3346–3417, 3482–3552, 3587–3703, 3781–3839, 3902–4022, 4114–4198, and 4249–4320; these read NIRDKLIELERLNEIYDNHSR, SFFQLEFDRLNEKLNMLIHDKDKLRELMVH, ADILRMKDEKKRDEKTIDEIQA, DTKK…QFED, RSIE…DLVK, ENRNDLEEVKRLAAEIDRAIDTASSMYEDA, PAIIESLDKIKDQINNARDNINRQIDNLNYNQ, DNIE…KKSD, SVKETLDKLKQAKEEDDKLAGVYDELEKIAK, IMQE…NIGK, DQIV…KTVV, DDEK…DEFK, QLQH…PEND, DELI…EKSL, KAEE…ELLD, ALKA…KEQL, AAHD…KTVV, and LDVA…DEFK. Basic and acidic residues predominate over residues 3010–3019; the sequence is EAEDVTAKES. Residues 3010 to 3033 are disordered; sequence EAEDVTAKESAKKKKKDKKKSPQE. Repeat copies occupy residues 3241–4143, 4144–5097, 5098–6000, 6001–6903, 6904–7806, and 7807–8199. The segment at 3241–8199 is 6 X tandem repeat; that stretch reads QVAKDIKDSK…TLIPDLEERA (4959 aa). Residues 3913 to 3922 show a composition bias toward basic and acidic residues; it reads EAEDVTAKES. Positions 3913-3936 are disordered; sequence EAEDVTAKESAKKKKKDKKKSPQE. A compositionally biased stretch (basic and acidic residues) spans 4372–4393; the sequence is ITREDGGDDNKSPDELIDDRGR. Residues 4372–4395 are disordered; sequence ITREDGGDDNKSPDELIDDRGRST. 28 coiled-coil regions span residues 4436–4506, 4541–4657, 4735–4793, 4856–4976, 5035–5152, 5203–5274, 5339–5409, 5444–5560, 5638–5696, 5759–5879, 5938–6055, 6106–6177, 6242–6312, 6347–6463, 6541–6599, 6662–6782, 6841–6958, 7009–7080, 7145–7215, 7250–7366, 7444–7502, 7565–7685, 7744–7861, 7912–7983, 8048–8118, 8153–8204, 8273–8329, and 8370–8390; these read DELI…EKSL, KAEE…ELLD, ALKA…KEQL, AAHD…KTVV, DDEK…DEFK, QLQH…PEND, KAEE…IWER, VAED…DINN, and STSIDLDQLLAEAKRLLKEIE. Over residues 4867 to 4876 the composition is skewed to basic and acidic residues; that stretch reads EAEDVTAKES. Positions 4867–4890 are disordered; that stretch reads EAEDVTAKESAKKKKKDKKKSPQE. Positions 5770-5779 are enriched in basic and acidic residues; sequence EAEDVTAKES. The tract at residues 5770 to 5793 is disordered; the sequence is EAEDVTAKESAKKKKKDKKKSPQE. Residues 6673–6682 are compositionally biased toward basic and acidic residues; the sequence is EAEDVTAKES. Residues 6673-6696 form a disordered region; the sequence is EAEDVTAKESAKKKKKDKKKSPQE. The segment covering 7576 to 7585 has biased composition (basic and acidic residues); sequence EAEDVTAKES. The disordered stretch occupies residues 7576-7599; the sequence is EAEDVTAKESAKKKKKDKKKSPQE. Disordered stretches follow at residues 8391-8418 and 8449-8480; these read PRLQLAQPDHDNEDDEDEEKGSDEKPYD and SDSESRSEFDSLDSRSDGLLSPIPDDSTLSEE. Positions 8401 to 8411 are enriched in acidic residues; sequence DNEDDEDEEKG. Residues 8451-8464 show a composition bias toward basic and acidic residues; the sequence is SESRSEFDSLDSRS. One can recognise a KASH domain in the interval 8486–8545; it reads RSRWRRVLRTALPLQALLVLLMGAACLVPHCDDEYCCQLLNNFAKSFDPSLEFVNGPPPF. A helical; Anchor for type IV membrane protein membrane pass occupies residues 8495 to 8513; it reads TALPLQALLVLLMGAACLV. Topologically, residues 8514-8545 are perinuclear space; the sequence is PHCDDEYCCQLLNNFAKSFDPSLEFVNGPPPF.

It belongs to the nesprin family. As to quaternary structure, interacts with F-actin via its N-terminal domain. Most likely interacts with unc-84; the interaction is probably required to recruit anc-1 to the nuclear envelope. As to expression, ubiquitously expressed in all postembryonic cells.

It localises to the nucleus outer membrane. The protein resides in the cytoplasm. Its subcellular location is the cytoskeleton. In terms of biological role, plays a central role in nuclear and mitochondrial anchoring. Probably connects nuclei to the cytoskeleton by interacting with unc-84 at the nuclear envelope and with F-actin in the cytoplasm, creating a bridge across the nuclear envelope between the cytoskeleton and the nucleus. Has a role in positioning of the cell body of the PVQ lumbar interneuron. This Caenorhabditis elegans protein is Nuclear anchorage protein 1.